A 128-amino-acid polypeptide reads, in one-letter code: Fluoride-specific ion channel FluC (128 aa).

Transmembrane regions (helical) follow at residues 4–24, 39–59, 71–91, and 99–119; these read LLLALIVGLGGFLGASLRYLI, GTLIANILGALLIGFIMEFSM, FLTTGIMGGLTTFSTFSYETI, and MTLGIENIILNLGCSLLFVVI. Residues G78 and T81 each coordinate Na(+).

The protein belongs to the fluoride channel Fluc/FEX (TC 1.A.43) family.

It localises to the cell membrane. It carries out the reaction fluoride(in) = fluoride(out). With respect to regulation, na(+) is not transported, but it plays an essential structural role and its presence is essential for fluoride channel function. Fluoride-specific ion channel. Important for reducing fluoride concentration in the cell, thus reducing its toxicity. This is Fluoride-specific ion channel FluC from Clostridium perfringens (strain 13 / Type A).